We begin with the raw amino-acid sequence, 216 residues long: 3-keto-L-gulonate-6-phosphate decarboxylase UlaD (216 aa).

Asp11 contributes to the substrate binding site. Mg(2+) contacts are provided by Glu33 and Asp62. Position 192 (Arg192) interacts with substrate.

The protein belongs to the HPS/KGPDC family. KGPDC subfamily. As to quaternary structure, homodimer. The cofactor is Mg(2+).

The catalysed reaction is 3-dehydro-L-gulonate 6-phosphate + H(+) = L-xylulose 5-phosphate + CO2. The protein operates within cofactor degradation; L-ascorbate degradation; D-xylulose 5-phosphate from L-ascorbate: step 2/4. In terms of biological role, catalyzes the decarboxylation of 3-keto-L-gulonate-6-P into L-xylulose-5-P. Is involved in the anaerobic L-ascorbate utilization. The polypeptide is 3-keto-L-gulonate-6-phosphate decarboxylase UlaD (Salmonella choleraesuis (strain SC-B67)).